The primary structure comprises 291 residues: Glutamate racemase (291 aa).

Residues 12-13 (DS) and 44-45 (YG) each bind substrate. Catalysis depends on Cys75, which acts as the Proton donor/acceptor. Residue 76 to 77 (NT) coordinates substrate. Cys187 (proton donor/acceptor) is an active-site residue. Position 188–189 (188–189 (TH)) interacts with substrate. The segment covering 234–247 (ATQAAGARAQMAPS) has biased composition (low complexity). Residues 234-257 (ATQAAGARAQMAPSAPEPKEGTPD) form a disordered region.

The protein belongs to the aspartate/glutamate racemases family.

It catalyses the reaction L-glutamate = D-glutamate. It participates in cell wall biogenesis; peptidoglycan biosynthesis. In terms of biological role, provides the (R)-glutamate required for cell wall biosynthesis. In Koribacter versatilis (strain Ellin345), this protein is Glutamate racemase.